The chain runs to 742 residues: Phosphoribosylformylglycinamidine synthase subunit PurL (742 aa).

His50 is a catalytic residue. The ATP site is built by Tyr53 and Lys92. Glu94 is a binding site for Mg(2+). Substrate-binding positions include 95 to 98 and Arg117; that span reads SHNH. Catalysis depends on His96, which acts as the Proton acceptor. Residue Asp118 coordinates Mg(2+). Residue Gln241 participates in substrate binding. Position 269 (Asp269) interacts with Mg(2+). A substrate-binding site is contributed by 313–315; the sequence is ESQ. The ATP site is built by Asp494 and Gly531. Residue Asn532 coordinates Mg(2+). Ser534 contacts substrate.

It belongs to the FGAMS family. As to quaternary structure, monomer. Part of the FGAM synthase complex composed of 1 PurL, 1 PurQ and 2 PurS subunits.

Its subcellular location is the cytoplasm. It carries out the reaction N(2)-formyl-N(1)-(5-phospho-beta-D-ribosyl)glycinamide + L-glutamine + ATP + H2O = 2-formamido-N(1)-(5-O-phospho-beta-D-ribosyl)acetamidine + L-glutamate + ADP + phosphate + H(+). Its pathway is purine metabolism; IMP biosynthesis via de novo pathway; 5-amino-1-(5-phospho-D-ribosyl)imidazole from N(2)-formyl-N(1)-(5-phospho-D-ribosyl)glycinamide: step 1/2. Functionally, part of the phosphoribosylformylglycinamidine synthase complex involved in the purines biosynthetic pathway. Catalyzes the ATP-dependent conversion of formylglycinamide ribonucleotide (FGAR) and glutamine to yield formylglycinamidine ribonucleotide (FGAM) and glutamate. The FGAM synthase complex is composed of three subunits. PurQ produces an ammonia molecule by converting glutamine to glutamate. PurL transfers the ammonia molecule to FGAR to form FGAM in an ATP-dependent manner. PurS interacts with PurQ and PurL and is thought to assist in the transfer of the ammonia molecule from PurQ to PurL. The polypeptide is Phosphoribosylformylglycinamidine synthase subunit PurL (Sinorhizobium fredii (strain NBRC 101917 / NGR234)).